The sequence spans 91 residues: Lactococcin-B immunity protein (91 aa).

Imparts immunity to lactococcin-B to naturally sensitive host strains. This Lactococcus lactis subsp. cremoris (Streptococcus cremoris) protein is Lactococcin-B immunity protein (lciB).